Consider the following 342-residue polypeptide: S-adenosylmethionine:tRNA ribosyltransferase-isomerase (342 aa).

This sequence belongs to the QueA family. In terms of assembly, monomer.

It is found in the cytoplasm. The catalysed reaction is 7-aminomethyl-7-carbaguanosine(34) in tRNA + S-adenosyl-L-methionine = epoxyqueuosine(34) in tRNA + adenine + L-methionine + 2 H(+). The protein operates within tRNA modification; tRNA-queuosine biosynthesis. In terms of biological role, transfers and isomerizes the ribose moiety from AdoMet to the 7-aminomethyl group of 7-deazaguanine (preQ1-tRNA) to give epoxyqueuosine (oQ-tRNA). The protein is S-adenosylmethionine:tRNA ribosyltransferase-isomerase of Streptococcus pyogenes serotype M49 (strain NZ131).